A 359-amino-acid polypeptide reads, in one-letter code: Type-1 angiotensin II receptor (359 aa).

Topologically, residues M1–N25 are extracellular. N-linked (GlcNAc...) asparagine glycosylation occurs at N4. Residues Q15 and D17 each contribute to the angiotensin II site. 2 disulfides stabilise this stretch: C18–C274 and C101–C180. The helical transmembrane segment at Y26 to F55 threads the bilayer. Residues Y56–T61 lie on the Cytoplasmic side of the membrane. The helical transmembrane segment at V62 to A89 threads the bilayer. The Extracellular segment spans residues M90–N98. Residues Y99–D125 traverse the membrane as a helical segment. Residues R126–T141 are Cytoplasmic-facing. Residues M142–I165 traverse the membrane as a helical segment. Residues H166–T190 are Extracellular-facing. R167 contributes to the angiotensin II binding site. N176 is a glycosylation site (N-linked (GlcNAc...) asparagine). Angiotensin II-binding residues include F182, H183, and Y184. N188 carries an N-linked (GlcNAc...) asparagine glycan. A helical membrane pass occupies residues L191 to T216. K199 contacts angiotensin II. Residues L217–F239 lie on the Cytoplasmic side of the membrane. Residues K240 to L268 form a helical membrane-spanning segment. Residues G269–D278 lie on the Extracellular side of the membrane. A helical transmembrane segment spans residues I279–F304. Residues L305–E359 are Cytoplasmic-facing. The interval S326–E359 is disordered. Over residues H327–K351 the composition is skewed to polar residues. The S-palmitoyl cysteine moiety is linked to residue C355.

This sequence belongs to the G-protein coupled receptor 1 family. As to quaternary structure, interacts with MAS1. Interacts with ARRB1. Interacts with FLNA (via filamin repeat 21); increases PKA-mediated phosphorylation of FLNA. In terms of processing, C-terminal Ser or Thr residues may be phosphorylated.

The protein localises to the cell membrane. Functionally, receptor for angiotensin II, a vasoconstricting peptide, which acts as a key regulator of blood pressure and sodium retention by the kidney. The activated receptor in turn couples to G-alpha proteins G(q) (GNAQ, GNA11, GNA14 or GNA15) and thus activates phospholipase C and increases the cytosolic Ca(2+) concentrations, which in turn triggers cellular responses such as stimulation of protein kinase C. The sequence is that of Type-1 angiotensin II receptor (AGTR1) from Sus scrofa (Pig).